We begin with the raw amino-acid sequence, 445 residues long: Scarecrow-like protein 18 (445 aa).

The segment covering Met-1–Glu-21 has biased composition (low complexity). A disordered region spans residues Met-1 to Leu-26. In terms of domain architecture, GRAS spans Ser-32–Lys-445. The tract at residues His-39 to Lys-127 is leucine repeat I (LRI). Positions Tyr-146 to Gly-217 are VHIID. Residues Leu-179–Asp-183 carry the VHIID motif. A leucine repeat II (LRII) region spans residues Arg-227 to Leu-259. Residues Ile-275–Asp-366 form a PFYRE region. The segment at Ala-369–Lys-445 is SAW.

It belongs to the GRAS family. Expressed in roots and flowers.

The protein localises to the nucleus. Probable transcription factor required for axillary (lateral) shoot meristem formation during vegetative development. Seems to act upstream of REVOLUTA. The sequence is that of Scarecrow-like protein 18 (SCL18) from Arabidopsis thaliana (Mouse-ear cress).